The primary structure comprises 508 residues: 2,3-bisphosphoglycerate-independent phosphoglycerate mutase (508 aa).

Mn(2+) contacts are provided by aspartate 14 and serine 64. Residue serine 64 is the Phosphoserine intermediate of the active site. Substrate contacts are provided by residues histidine 125, 155-156, arginine 187, arginine 193, 259-262, and lysine 332; these read RD and RADR. Mn(2+) contacts are provided by aspartate 399, histidine 403, aspartate 440, histidine 441, and histidine 459.

Belongs to the BPG-independent phosphoglycerate mutase family. As to quaternary structure, monomer. It depends on Mn(2+) as a cofactor.

The enzyme catalyses (2R)-2-phosphoglycerate = (2R)-3-phosphoglycerate. It participates in carbohydrate degradation; glycolysis; pyruvate from D-glyceraldehyde 3-phosphate: step 3/5. Functionally, catalyzes the interconversion of 2-phosphoglycerate and 3-phosphoglycerate. This chain is 2,3-bisphosphoglycerate-independent phosphoglycerate mutase, found in Pseudomonas fluorescens (strain Pf0-1).